The following is a 177-amino-acid chain: Large ribosomal subunit protein uL6 (177 aa).

The protein belongs to the universal ribosomal protein uL6 family. In terms of assembly, part of the 50S ribosomal subunit.

Its function is as follows. This protein binds to the 23S rRNA, and is important in its secondary structure. It is located near the subunit interface in the base of the L7/L12 stalk, and near the tRNA binding site of the peptidyltransferase center. This chain is Large ribosomal subunit protein uL6, found in Salmonella dublin (strain CT_02021853).